Consider the following 182-residue polypeptide: Transcription termination/antitermination protein NusG (182 aa).

A KOW domain is found at 130–161; that stretch reads VGEVVRVNEGPFADFNGTVEEVDYEKSRLKVS.

The protein belongs to the NusG family.

Its function is as follows. Participates in transcription elongation, termination and antitermination. The protein is Transcription termination/antitermination protein NusG of Vibrio vulnificus (strain CMCP6).